Reading from the N-terminus, the 476-residue chain is Efflux pump atB (476 aa).

The interval 1–38 (MAPQLAGSSHSSSASDQAHRQSSDPALESGSDTHVGSI) is disordered. 10 consecutive transmembrane segments (helical) span residues 69–89 (LIVA…LAPL), 96–116 (KPVY…CAVA), 127–147 (FFNG…VGDL), 186–206 (WSFY…SLLV), 264–284 (LLLC…FGAF), 294–314 (FNLW…IIGI), 347–367 (LPPA…FAWT), 372–392 (VHWI…IMIF), 403–425 (YPLY…AAAF), and 440–460 (WAGF…YIFY).

This sequence belongs to the major facilitator superfamily.

It localises to the cell membrane. In terms of biological role, efflux pump that might be required for efficient secretion of terreic acid. The sequence is that of Efflux pump atB from Aspergillus terreus (strain NIH 2624 / FGSC A1156).